Consider the following 813-residue polypeptide: Glycerol-3-phosphate acyltransferase (813 aa).

An HXXXXD motif motif is present at residues 304–309 (CHRSHI).

It belongs to the GPAT/DAPAT family.

The protein localises to the cell inner membrane. The enzyme catalyses sn-glycerol 3-phosphate + an acyl-CoA = a 1-acyl-sn-glycero-3-phosphate + CoA. Its pathway is phospholipid metabolism; CDP-diacylglycerol biosynthesis; CDP-diacylglycerol from sn-glycerol 3-phosphate: step 1/3. In Actinobacillus succinogenes (strain ATCC 55618 / DSM 22257 / CCUG 43843 / 130Z), this protein is Glycerol-3-phosphate acyltransferase.